A 356-amino-acid polypeptide reads, in one-letter code: Ornithine cyclodeaminase (356 aa).

Arginine 53 and lysine 77 together coordinate L-ornithine. NAD(+) is bound by residues threonine 92, arginine 120, 147 to 148, aspartate 169, threonine 209, 232 to 235, lysine 239, and serine 300; these read AQ and VGGD. Residue arginine 120 coordinates L-ornithine. Position 235 (aspartate 235) interacts with L-ornithine. Aspartate 235 serves as the catalytic Proton donor/acceptor. An L-ornithine-binding site is contributed by valine 301.

The protein belongs to the ornithine cyclodeaminase/mu-crystallin family. It depends on NAD(+) as a cofactor.

The catalysed reaction is L-ornithine = L-proline + NH4(+). The protein operates within amino-acid biosynthesis; L-proline biosynthesis; L-proline from L-ornithine: step 1/1. Its activity is regulated as follows. Is inhibited by L-proline and L-lysine. Is not activated by small concentrations of L-arginine, and is even inhibited by about 50% at 0.5 mM L-arginine. Catalyzes the conversion of L-ornithine into L-proline with release of ammonia. Is involved in the utilization of octopine, a catabolic pathway that proceeds through L-arginine and L-ornithine to L-proline. Octopine is a predominant opine in plant cells transformed with Ti plasmid pTiAch5. The polypeptide is Ornithine cyclodeaminase (Agrobacterium tumefaciens (strain Ach5)).